The following is a 274-amino-acid chain: Large ribosomal subunit protein uL2 (274 aa).

Positions 223–274 (GIAMNPVDHPHGGGEGRSKGNHPVTPWGMPTKGYKTRKKKQSDKYIISRRKK) are disordered. Residues 230–240 (DHPHGGGEGRS) are compositionally biased toward basic and acidic residues. Residues 256 to 274 (YKTRKKKQSDKYIISRRKK) show a composition bias toward basic residues.

It belongs to the universal ribosomal protein uL2 family. Part of the 50S ribosomal subunit. Forms a bridge to the 30S subunit in the 70S ribosome.

In terms of biological role, one of the primary rRNA binding proteins. Required for association of the 30S and 50S subunits to form the 70S ribosome, for tRNA binding and peptide bond formation. It has been suggested to have peptidyltransferase activity; this is somewhat controversial. Makes several contacts with the 16S rRNA in the 70S ribosome. This chain is Large ribosomal subunit protein uL2, found in Nautilia profundicola (strain ATCC BAA-1463 / DSM 18972 / AmH).